We begin with the raw amino-acid sequence, 138 residues long: Aspartate 1-decarboxylase (138 aa).

S25 functions as the Schiff-base intermediate with substrate; via pyruvic acid in the catalytic mechanism. Residue S25 is modified to Pyruvic acid (Ser). T57 lines the substrate pocket. The active-site Proton donor is Y58. 73 to 75 (GAA) lines the substrate pocket.

The protein belongs to the PanD family. In terms of assembly, heterooctamer of four alpha and four beta subunits. Requires pyruvate as cofactor. Is synthesized initially as an inactive proenzyme, which is activated by self-cleavage at a specific serine bond to produce a beta-subunit with a hydroxyl group at its C-terminus and an alpha-subunit with a pyruvoyl group at its N-terminus.

It localises to the cytoplasm. The catalysed reaction is L-aspartate + H(+) = beta-alanine + CO2. It participates in cofactor biosynthesis; (R)-pantothenate biosynthesis; beta-alanine from L-aspartate: step 1/1. Functionally, catalyzes the pyruvoyl-dependent decarboxylation of aspartate to produce beta-alanine. The sequence is that of Aspartate 1-decarboxylase from Renibacterium salmoninarum (strain ATCC 33209 / DSM 20767 / JCM 11484 / NBRC 15589 / NCIMB 2235).